A 389-amino-acid polypeptide reads, in one-letter code: Succinate--CoA ligase [ADP-forming] subunit beta (389 aa).

Positions Arg9 to Lys236 constitute an ATP-grasp domain. ATP contacts are provided by residues Lys45, Gly52 to Gly54, Ala94, and Glu99. Mg(2+) contacts are provided by Asn191 and Asp205. Residues Asn256 and Gly318 to Thr320 contribute to the substrate site.

The protein belongs to the succinate/malate CoA ligase beta subunit family. Heterotetramer of two alpha and two beta subunits. Mg(2+) serves as cofactor.

The catalysed reaction is succinate + ATP + CoA = succinyl-CoA + ADP + phosphate. The enzyme catalyses GTP + succinate + CoA = succinyl-CoA + GDP + phosphate. It participates in carbohydrate metabolism; tricarboxylic acid cycle; succinate from succinyl-CoA (ligase route): step 1/1. In terms of biological role, succinyl-CoA synthetase functions in the citric acid cycle (TCA), coupling the hydrolysis of succinyl-CoA to the synthesis of either ATP or GTP and thus represents the only step of substrate-level phosphorylation in the TCA. The beta subunit provides nucleotide specificity of the enzyme and binds the substrate succinate, while the binding sites for coenzyme A and phosphate are found in the alpha subunit. This is Succinate--CoA ligase [ADP-forming] subunit beta from Pseudarthrobacter chlorophenolicus (strain ATCC 700700 / DSM 12829 / CIP 107037 / JCM 12360 / KCTC 9906 / NCIMB 13794 / A6) (Arthrobacter chlorophenolicus).